The chain runs to 257 residues: Hydroxypyruvate/pyruvate aldolase (257 aa).

The active-site Proton acceptor is the His48. The a divalent metal cation site is built by Glu152 and Asp178.

It belongs to the HpcH/HpaI aldolase family. Requires a divalent metal cation as cofactor.

It carries out the reaction D-glyceraldehyde + 3-hydroxypyruvate = 2-dehydro-D-gluconate. The catalysed reaction is D-glyceraldehyde + pyruvate = 2-dehydro-3-deoxy-L-galactonate. It catalyses the reaction 2-dehydro-3-deoxy-D-gluconate = D-glyceraldehyde + pyruvate. In terms of biological role, aldolase which can catalyze in vitro the aldolisation reaction between hydroxypyruvate (HPA) or pyruvate (PA) and D-glyceraldehyde (D-GA). The condensation of hydroxypyruvate and D-glyceraldehyde produces 2-dehydro-D-gluconate as the major product. The condensation of pyruvate and D-glyceraldehyde produces 2-dehydro-3-deoxy-L-galactonate as the major product and 2-dehydro-3-deoxy-D-gluconate. In Roseovarius nubinhibens (strain ATCC BAA-591 / DSM 15170 / ISM), this protein is Hydroxypyruvate/pyruvate aldolase.